The following is a 272-amino-acid chain: Outer surface protein A (272 aa).

The signal sequence occupies residues 1-16 (MKKYLLGIGLILALIA). A lipid anchor (N-palmitoyl cysteine) is attached at C17. C17 carries S-diacylglycerol cysteine lipidation.

It belongs to the OspA lipoprotein family.

The protein resides in the cell outer membrane. The protein localises to the cell surface. The chain is Outer surface protein A from Borreliella burgdorferi (Lyme disease spirochete).